A 574-amino-acid polypeptide reads, in one-letter code: Iron hydrogenase 1 (574 aa).

A 2Fe-2S ferredoxin-type domain is found at 1 to 78 (MKTIIINGVQ…GMIINTNSDA (78 aa)). [2Fe-2S] cluster is bound by residues C34, C46, C49, and C62. In terms of domain architecture, 4Fe-4S His(Cys)3-ligated-type spans 78–117 (AVNEKIKSRISQLLDIHEFKCGPCNRRENCEFLKLVIKYK). 16 residues coordinate [4Fe-4S] cluster: H94, C98, C101, C107, C147, C150, C153, C157, C190, C193, C196, C200, C300, C355, C499, and C503. 4Fe-4S ferredoxin-type domains follow at residues 138-167 (KSLT…YAMK) and 181-210 (DEKC…EKSH). Position 503 (C503) interacts with Fe(2+).

As to quaternary structure, monomer. [2Fe-2S] cluster is required as a cofactor. The cofactor is [4Fe-4S] cluster. It depends on Fe(2+) as a cofactor.

The enzyme catalyses H2 + 2 oxidized [2Fe-2S]-[ferredoxin] = 2 reduced [2Fe-2S]-[ferredoxin] + 2 H(+). The polypeptide is Iron hydrogenase 1 (Clostridium pasteurianum).